A 236-amino-acid polypeptide reads, in one-letter code: Small ribosomal subunit protein uS2c (236 aa).

This sequence belongs to the universal ribosomal protein uS2 family.

It localises to the plastid. The protein resides in the chloroplast. The polypeptide is Small ribosomal subunit protein uS2c (rps2) (Amborella trichopoda).